The chain runs to 364 residues: Autophagy-related protein 5 (364 aa).

Over residues 1–13 (MASPNPYSYSPQL) the composition is skewed to polar residues. Positions 1-103 (MASPNPYSYS…SLPPKPKPSS (103 aa)) are disordered. Low complexity predominate over residues 28 to 42 (SSPSFRSTPFRSSRG). A compositionally biased stretch (gly residues) spans 43–53 (TGAGTGIGLGL). Positions 72–82 (RSGDGSHDDLP) are enriched in basic and acidic residues. A Glycyl lysine isopeptide (Lys-Gly) (interchain with G-Cter in ATG12) cross-link involves residue Lys-202. Residues 262–306 (PSSPSPPSSDQQQPQRPGGSSSSGSYRVMQTLVPPRGPNNRTPQT) are disordered. The span at 269-286 (SSDQQQPQRPGGSSSSGS) shows a compositional bias: low complexity.

The protein belongs to the ATG5 family. Conjugated with atg12. In terms of processing, conjugated to atg12; which is essential for autophagy.

The protein localises to the preautophagosomal structure membrane. Its function is as follows. Involved in cytoplasm to vacuole transport (Cvt) and autophagic vesicle formation. Autophagy is essential for maintenance of amino acid levels and protein synthesis under nitrogen starvation. Required for selective autophagic degradation of the nucleus (nucleophagy). Also required for mitophagy, which eliminates defective or superfluous mitochondria in order to fulfill cellular energy requirements and prevent excess ROS production. Conjugation with atg12, through a ubiquitin-like conjugating system involving apg-5/atg7 as an E1-like activating enzyme and atg10 as an E2-like conjugating enzyme, is essential for its function. The atg12-apg-4/atg5 conjugate acts as an E3-like enzyme which is required for lipidation of apg-6/atg8 and apg-6/atg8 association to the vesicle membranes. This chain is Autophagy-related protein 5 (apg-4), found in Neurospora crassa (strain ATCC 24698 / 74-OR23-1A / CBS 708.71 / DSM 1257 / FGSC 987).